The primary structure comprises 520 residues: Amphoterin-induced protein 2 (520 aa).

Residues Met1–Ser37 form the signal peptide. An LRRNT domain is found at Gly38–Arg67. Residues Gly38–Thr398 lie on the Extracellular side of the membrane. 2 disulfides stabilise this stretch: Cys40-Cys46 and Cys44-Cys53. Asn57 carries N-linked (GlcNAc...) asparagine glycosylation. 6 LRR repeats span residues Leu68 to Val89, Lys93 to Thr114, Asn117 to Glu138, Val141 to Gly162, His165 to Gly186, and Asp192 to Leu213. Asn103 carries an N-linked (GlcNAc...) asparagine glycan. The 57-residue stretch at Asn227–His283 folds into the LRRCT domain. 2 disulfides stabilise this stretch: Cys231–Cys259 and Cys233–Cys281. 7 N-linked (GlcNAc...) asparagine glycosylation sites follow: Asn280, Asn287, Asn344, Asn372, Asn380, Asn383, and Asn387. An Ig-like C2-type domain is found at Gly288 to Met378. Cysteines 309 and 362 form a disulfide. A helical membrane pass occupies residues Ala399 to Leu419. At Thr420 to Thr520 the chain is on the cytoplasmic side. 2 disordered regions span residues Gln437 to Arg458 and Ser498 to Thr520.

This sequence belongs to the immunoglobulin superfamily. AMIGO family. In terms of assembly, binds itself as well as AMIGO1 and AMIGO3. As to expression, highest levels in the lung. High levels in cerebellar granule neurons and Purkinje cells. Also in pyramidal cells between CA1 and CA3 regions of the hippocampus and granule cells of the dentate gyrus.

The protein localises to the cell membrane. Its subcellular location is the nucleus. Required for depolarization-dependent survival of cultured cerebellar granule neurons. May mediate homophilic as well as heterophilic cell-cell interaction with AMIGO1 or AMIGO3. May contribute to signal transduction through its intracellular domain. This is Amphoterin-induced protein 2 from Rattus norvegicus (Rat).